The chain runs to 200 residues: Pyridoxine/pyridoxamine 5'-phosphate oxidase (200 aa).

FMN contacts are provided by residues 49–54 (RMLLLK), 64–65 (YT), Arg70, Lys71, and Gln93. Lys54 is a substrate binding site. Substrate is bound by residues Tyr111, Arg115, and Ser119. Residues 128-129 (QS) and Trp173 contribute to the FMN site. 179–181 (RLH) is a binding site for substrate. An FMN-binding site is contributed by Arg183.

The protein belongs to the pyridoxamine 5'-phosphate oxidase family. As to quaternary structure, homodimer. FMN is required as a cofactor.

It catalyses the reaction pyridoxamine 5'-phosphate + O2 + H2O = pyridoxal 5'-phosphate + H2O2 + NH4(+). It carries out the reaction pyridoxine 5'-phosphate + O2 = pyridoxal 5'-phosphate + H2O2. It participates in cofactor metabolism; pyridoxal 5'-phosphate salvage; pyridoxal 5'-phosphate from pyridoxamine 5'-phosphate: step 1/1. It functions in the pathway cofactor metabolism; pyridoxal 5'-phosphate salvage; pyridoxal 5'-phosphate from pyridoxine 5'-phosphate: step 1/1. In terms of biological role, catalyzes the oxidation of either pyridoxine 5'-phosphate (PNP) or pyridoxamine 5'-phosphate (PMP) into pyridoxal 5'-phosphate (PLP). The sequence is that of Pyridoxine/pyridoxamine 5'-phosphate oxidase from Gluconobacter oxydans (strain 621H) (Gluconobacter suboxydans).